The primary structure comprises 914 residues: Polyribonucleotide nucleotidyltransferase (914 aa).

Positions 407 to 427 are disordered; it reads YMHNYEMPPYSTGETGRVGSP. Residues aspartate 521 and aspartate 527 each coordinate Mg(2+). Residues 587-646 enclose the KH domain; it reads PRIITTSVPVEKIGEVIGPKGKMINQIQEDTGAEIAIEDDGTVFISSEGGEAAKKAKSII. Residues 658-730 enclose the S1 motif domain; it reads GETYNGKVVK…DRGKISLAIP (73 aa). Residues 727–914 form a disordered region; it reads LAIPGFEDQE…VRRDFDPFED (188 aa). Basic and acidic residues-rich tracts occupy residues 742 to 789, 797 to 865, and 873 to 899; these read SRGD…RRSD, DRPR…DRRG, and RGSDRNPRYATDDNYDDYRADREERTE.

Belongs to the polyribonucleotide nucleotidyltransferase family. Requires Mg(2+) as cofactor.

The protein resides in the cytoplasm. The enzyme catalyses RNA(n+1) + phosphate = RNA(n) + a ribonucleoside 5'-diphosphate. Functionally, involved in mRNA degradation. Catalyzes the phosphorolysis of single-stranded polyribonucleotides processively in the 3'- to 5'-direction. The chain is Polyribonucleotide nucleotidyltransferase from Bifidobacterium longum subsp. infantis (strain ATCC 15697 / DSM 20088 / JCM 1222 / NCTC 11817 / S12).